The following is a 55-amino-acid chain: Conotoxin Cal14.14 (55 aa).

Positions 1 to 20 (MFRLGVFLLTFLLLVSMATS) are cleaved as a signal peptide. 2 disulfide bridges follow: Cys-34-Cys-48 and Cys-38-Cys-52.

In terms of tissue distribution, expressed by the venom duct.

The protein resides in the secreted. Its function is as follows. Probable neurotoxin. This is Conotoxin Cal14.14 from Californiconus californicus (California cone).